The primary structure comprises 400 residues: NAD-dependent protein deacetylase sirtuin-7 (400 aa).

Residues Met-1–Glu-27 are disordered. The segment covering Arg-8–Glu-27 has biased composition (basic and acidic residues). The 248-residue stretch at Pro-82–Glu-329 folds into the Deacetylase sirtuin-type domain. NAD(+) is bound by residues Gly-107–Trp-126 and Gln-167–Asp-170. His-187 functions as the Proton acceptor in the catalytic mechanism. The Zn(2+) site is built by Cys-195, Cys-198, Cys-225, and Cys-228. Residues Gly-268–Ser-270, Asn-297–Gln-299, and Cys-315 contribute to the NAD(+) site. Residues Ser-354–Pro-380 are disordered. Arg-388 carries the post-translational modification Asymmetric dimethylarginine; alternate. At Arg-388 the chain carries Omega-N-methylarginine; alternate.

This sequence belongs to the sirtuin family. Class IV subfamily. In terms of assembly, interacts with UBTF and the RNA polymerase I complex. Interacts with components of the B-WICH complex, such as MYBBP1A, SMARCA5/SNF2H and BAZ1B/WSTF. Interacts with ELK4, leading to stabilization at target promoters for H3K18Ac deacetylation. Interacts with histone H2A and/or histone H2B. Interacts with DNMT1. Interacts with SIRT1. Zn(2+) is required as a cofactor. In terms of processing, phosphorylated during mitosis. Post-translationally, methylation at Arg-388 by PRMT6 inhibits the H3K18Ac histone deacetylase activity, promoting mitochondria biogenesis and maintaining mitochondria respiration. Ubiquitinated via 'Lys-63'-linked ubiquitin chains. Deubiquitinated by USP7, inhibiting the H3K18Ac histone deacetylase activity and regulating gluconeogenesis. Ubiquitinated by E3 ubiquitin-protein ligase complex containing FBXO7; leading to proteasomal degradation.

It is found in the nucleus. The protein resides in the nucleolus. The protein localises to the nucleoplasm. Its subcellular location is the chromosome. It localises to the cytoplasm. It carries out the reaction N(6)-acetyl-L-lysyl-[protein] + NAD(+) + H2O = 2''-O-acetyl-ADP-D-ribose + nicotinamide + L-lysyl-[protein]. The catalysed reaction is N(6)-glutaryl-L-lysyl-[protein] + NAD(+) + H2O = 2''-O-glutaryl-ADP-D-ribose + nicotinamide + L-lysyl-[protein]. The enzyme catalyses N(6)-succinyl-L-lysyl-[protein] + NAD(+) + H2O = 2''-O-succinyl-ADP-D-ribose + nicotinamide + L-lysyl-[protein]. It catalyses the reaction N(6)-propanoyl-L-lysyl-[protein] + NAD(+) + H2O = 3''-O-propanoyl-ADP-D-ribose + nicotinamide + L-lysyl-[protein]. It carries out the reaction N(6)-decanoyl-L-lysyl-[protein] + NAD(+) + H2O = 2''-O-decanoyl-ADP-D-ribose + nicotinamide + L-lysyl-[protein]. NAD-dependent protein-lysine deacetylase and deacylase activities are activated by nucleic acids. Histone deacetylase activity is activated by DNA and nucleosomes. Protein-lysine deacylase activity is activated by RNA. H3K18Ac histone deacetylase activity is inhibited by methylation at Arg-388. H3K18Ac histone deacetylase activity is inhibited by deubiquitination by USP7. In terms of biological role, NAD-dependent protein-lysine deacylase that can act both as a deacetylase or deacylase (desuccinylase, depropionylase, deglutarylase and dedecanoylase), depending on the context. Specifically mediates deacetylation of histone H3 at 'Lys-18' (H3K18Ac). In contrast to other histone deacetylases, displays strong preference for a specific histone mark, H3K18Ac, directly linked to control of gene expression. H3K18Ac is mainly present around the transcription start site of genes and has been linked to activation of nuclear hormone receptors; SIRT7 thereby acts as a transcription repressor. Moreover, H3K18 hypoacetylation has been reported as a marker of malignancy in various cancers and seems to maintain the transformed phenotype of cancer cells. Also able to mediate deacetylation of histone H3 at 'Lys-36' (H3K36Ac) in the context of nucleosomes. Also mediates deacetylation of non-histone proteins, such as ATM, CDK9, DDX21, DDB1, FBL, FKBP5/FKBP51, GABPB1, RAN, RRP9/U3-55K and POLR1E/PAF53. Enriched in nucleolus where it stimulates transcription activity of the RNA polymerase I complex. Acts by mediating the deacetylation of the RNA polymerase I subunit POLR1E/PAF53, thereby promoting the association of RNA polymerase I with the rDNA promoter region and coding region. In response to metabolic stress, SIRT7 is released from nucleoli leading to hyperacetylation of POLR1E/PAF53 and decreased RNA polymerase I transcription. Required to restore the transcription of ribosomal RNA (rRNA) at the exit from mitosis. Promotes pre-ribosomal RNA (pre-rRNA) cleavage at the 5'-terminal processing site by mediating deacetylation of RRP9/U3-55K, a core subunit of the U3 snoRNP complex. Mediates 'Lys-37' deacetylation of Ran, thereby regulating the nuclear export of NF-kappa-B subunit RELA/p65. Acts as a regulator of DNA damage repair by mediating deacetylation of ATM during the late stages of DNA damage response, promoting ATM dephosphorylation and deactivation. Suppresses the activity of the DCX (DDB1-CUL4-X-box) E3 ubiquitin-protein ligase complexes by mediating deacetylation of DDB1, which prevents the interaction between DDB1 and CUL4 (CUL4A or CUL4B). Activates RNA polymerase II transcription by mediating deacetylation of CDK9, thereby promoting 'Ser-2' phosphorylation of the C-terminal domain (CTD) of RNA polymerase II. Deacetylates FBL, promoting histone-glutamine methyltransferase activity of FBL. Acts as a regulator of mitochondrial function by catalyzing deacetylation of GABPB1. Regulates Akt/AKT1 activity by mediating deacetylation of FKBP5/FKBP51. Required to prevent R-loop-associated DNA damage and transcription-associated genomic instability by mediating deacetylation and subsequent activation of DDX21, thereby overcoming R-loop-mediated stalling of RNA polymerases. In addition to protein deacetylase activity, also acts as a protein-lysine deacylase. Acts as a protein depropionylase by mediating depropionylation of Osterix (SP7), thereby regulating bone formation by osteoblasts. Acts as a histone deglutarylase by mediating deglutarylation of histone H4 on 'Lys-91' (H4K91glu); a mark that destabilizes nucleosomes by promoting dissociation of the H2A-H2B dimers from nucleosomes. Acts as a histone desuccinylase: in response to DNA damage, recruited to DNA double-strand breaks (DSBs) and catalyzes desuccinylation of histone H3 on 'Lys-122' (H3K122succ), thereby promoting chromatin condensation and DSB repair. Also promotes DSB repair by promoting H3K18Ac deacetylation, regulating non-homologous end joining (NHEJ). Along with its role in DNA repair, required for chromosome synapsis during prophase I of female meiosis by catalyzing H3K18Ac deacetylation. Involved in transcriptional repression of LINE-1 retrotransposon via H3K18Ac deacetylation, and promotes their association with the nuclear lamina. Required to stabilize ribosomal DNA (rDNA) heterochromatin and prevent cellular senescence induced by rDNA instability. Acts as a negative regulator of SIRT1 by preventing autodeacetylation of SIRT1, restricting SIRT1 deacetylase activity. The chain is NAD-dependent protein deacetylase sirtuin-7 from Homo sapiens (Human).